A 405-amino-acid polypeptide reads, in one-letter code: MKRTIIMMLDSFGVGAATDAESFGDVGSDTFGSIAKACAEGRADIGREGPLKLPNLSKLGLALAAKESTGTFAPGFSDDVEVIGAYGHADELSTGKDTPSGHWEMAGVPVLYEWGYFSDLTNSFPKELTDKILARAGLDGYLGNCHASGTAILEELGEEHMRTGKPIFYTSADSVFQIACHEESFGLENLYNLCIIAREELEPYNIGRVIARAFVGTGPSDFARTGNRRDYAVEPPSKTVLDKMKAAGGEVISVGKIADIYANCGITQKVKATGLEALFDATLEQVKAAGDKSIVFTNFVDFDSHYGHRRDIAGYAKALEYFDSRLPEIFEILGEDDLLLLTADHGCDPSWKGTDHTRERVPVLAYGAGLKAGSLGRRNSFADIGQSIASYFKLEPMEYGESFIK.

Mn(2+)-binding residues include Asp-10, Asp-303, His-308, Asp-344, His-345, and His-356.

It belongs to the phosphopentomutase family. It depends on Mn(2+) as a cofactor.

The protein resides in the cytoplasm. The catalysed reaction is 2-deoxy-alpha-D-ribose 1-phosphate = 2-deoxy-D-ribose 5-phosphate. It carries out the reaction alpha-D-ribose 1-phosphate = D-ribose 5-phosphate. It participates in carbohydrate degradation; 2-deoxy-D-ribose 1-phosphate degradation; D-glyceraldehyde 3-phosphate and acetaldehyde from 2-deoxy-alpha-D-ribose 1-phosphate: step 1/2. Its function is as follows. Isomerase that catalyzes the conversion of deoxy-ribose 1-phosphate (dRib-1-P) and ribose 1-phosphate (Rib-1-P) to deoxy-ribose 5-phosphate (dRib-5-P) and ribose 5-phosphate (Rib-5-P), respectively. The chain is Phosphopentomutase from Shewanella woodyi (strain ATCC 51908 / MS32).